We begin with the raw amino-acid sequence, 523 residues long: Bifunctional purine biosynthesis protein PurH (523 aa).

One can recognise an MGS-like domain in the interval 4–152 (DHIRRPIRRA…KNHPSVAVVT (149 aa)).

It belongs to the PurH family.

The catalysed reaction is (6R)-10-formyltetrahydrofolate + 5-amino-1-(5-phospho-beta-D-ribosyl)imidazole-4-carboxamide = 5-formamido-1-(5-phospho-D-ribosyl)imidazole-4-carboxamide + (6S)-5,6,7,8-tetrahydrofolate. It carries out the reaction IMP + H2O = 5-formamido-1-(5-phospho-D-ribosyl)imidazole-4-carboxamide. It functions in the pathway purine metabolism; IMP biosynthesis via de novo pathway; 5-formamido-1-(5-phospho-D-ribosyl)imidazole-4-carboxamide from 5-amino-1-(5-phospho-D-ribosyl)imidazole-4-carboxamide (10-formyl THF route): step 1/1. The protein operates within purine metabolism; IMP biosynthesis via de novo pathway; IMP from 5-formamido-1-(5-phospho-D-ribosyl)imidazole-4-carboxamide: step 1/1. In Mycobacterium ulcerans (strain Agy99), this protein is Bifunctional purine biosynthesis protein PurH.